The chain runs to 2167 residues: Beige protein homolog 1 (2167 aa).

A BEACH-type PH domain is found at 1368–1499 (KDNDSIATIW…VRDDVLRVLN (132 aa)). The BEACH domain occupies 1545 to 1839 (SANNSLIDGF…QIFQEPHPEK (295 aa)). A Glycyl lysine isopeptide (Lys-Gly) (interchain with G-Cter in ubiquitin) cross-link involves residue K1667. 5 WD repeats span residues 1927-1965 (THMAQITSFAYWKLGEFITGDKNGLIKVWKYRKDKHSVS), 1976-2015 (GHLCELKEMRCYHDYNTLLTLDISGLVYVWDMINFELVRQ), 2017-2054 (TNDAQKVAISQHAGSIMVLTKNNAISIFNLNGQIYTSK), 2072-2111 (KLDAGYRKHIYWKEMEILLVGFEDGTIEIYELFLNFHNEW), and 2129-2167 (SIKGQGKTYLSQKRRKDTAEPHEIEVIAGTLDGRLAIWY).

It is found in the cytoplasm. It localises to the membrane. May be involved in protein sorting and cell wall formation. This Saccharomyces cerevisiae (strain ATCC 204508 / S288c) (Baker's yeast) protein is Beige protein homolog 1 (BPH1).